Reading from the N-terminus, the 279-residue chain is HTH-type transcriptional regulator HdfR (279 aa).

The HTH lysR-type domain occupies 1–58 (MDTELLKTFLEVSRTRHFGRAAESLYLTQSAVSFRIRQLENQLGVNLFTRHRNNIRLT). The H-T-H motif DNA-binding region spans 18-37 (FGRAAESLYLTQSAVSFRIR).

Belongs to the LysR transcriptional regulatory family.

Negatively regulates the transcription of the flagellar master operon flhDC by binding to the upstream region of the operon. The chain is HTH-type transcriptional regulator HdfR from Escherichia coli O7:K1 (strain IAI39 / ExPEC).